The chain runs to 408 residues: uncharacterized protein (408 aa).

Disordered stretches follow at residues 184–206 (DENN…SILF) and 254–317 (NNKT…SSDS). Low complexity predominate over residues 187 to 206 (NNNSNNNNNNNSNNNSSILF).

This is an uncharacterized protein from Dictyostelium discoideum (Social amoeba).